A 412-amino-acid polypeptide reads, in one-letter code: Imidazolonepropionase (412 aa).

Residues His-76 and His-78 each contribute to the Fe(3+) site. His-76 and His-78 together coordinate Zn(2+). Residues Arg-85, Tyr-148, and His-181 each contribute to the 4-imidazolone-5-propanoate site. Tyr-148 is an N-formimidoyl-L-glutamate binding site. His-242 provides a ligand contact to Fe(3+). Residue His-242 participates in Zn(2+) binding. 4-imidazolone-5-propanoate is bound at residue Glu-245. A Fe(3+)-binding site is contributed by Asp-317. Asp-317 lines the Zn(2+) pocket. N-formimidoyl-L-glutamate-binding residues include Asn-319 and Gly-321. Ser-322 is a binding site for 4-imidazolone-5-propanoate.

It belongs to the metallo-dependent hydrolases superfamily. HutI family. The cofactor is Zn(2+). Fe(3+) serves as cofactor.

It is found in the cytoplasm. It catalyses the reaction 4-imidazolone-5-propanoate + H2O = N-formimidoyl-L-glutamate. Its pathway is amino-acid degradation; L-histidine degradation into L-glutamate; N-formimidoyl-L-glutamate from L-histidine: step 3/3. Functionally, catalyzes the hydrolytic cleavage of the carbon-nitrogen bond in imidazolone-5-propanoate to yield N-formimidoyl-L-glutamate. It is the third step in the universal histidine degradation pathway. The chain is Imidazolonepropionase from Staphylococcus aureus (strain bovine RF122 / ET3-1).